Consider the following 268-residue polypeptide: Energy-coupling factor transporter transmembrane protein EcfT (268 aa).

5 helical membrane-spanning segments follow: residues 26–46 (IVTF…TYAW), 72–92 (IFWL…GTPI), 106–126 (ILNA…STIL), 149–169 (IGVP…FVPL), and 247–267 (VAFA…TWLH).

The protein belongs to the energy-coupling factor EcfT family. In terms of assembly, forms a stable energy-coupling factor (ECF) transporter complex composed of 2 membrane-embedded substrate-binding proteins (S component), 2 ATP-binding proteins (A component) and 2 transmembrane proteins (T component). May be able to interact with more than 1 S component at a time.

Its subcellular location is the cell membrane. Transmembrane (T) component of an energy-coupling factor (ECF) ABC-transporter complex. Unlike classic ABC transporters this ECF transporter provides the energy necessary to transport a number of different substrates. In Leuconostoc gelidum subsp. gasicomitatum (strain DSM 15947 / CCUG 46042 / CECT 5767 / JCM 12535 / LMG 18811 / NBRC 113245 / TB1-10) (Leuconostoc gasicomitatum), this protein is Energy-coupling factor transporter transmembrane protein EcfT.